Reading from the N-terminus, the 406-residue chain is Dual-specificity RNA methyltransferase RlmN (406 aa).

Glu-119 serves as the catalytic Proton acceptor. In terms of domain architecture, Radical SAM core spans 125–370 (DKGRGTLCVS…AMVRRTRGDD (246 aa)). Cys-132 and Cys-375 are disulfide-bonded. [4Fe-4S] cluster contacts are provided by Cys-139, Cys-143, and Cys-146. S-adenosyl-L-methionine-binding positions include 192-193 (GE), Ser-224, 246-248 (SLH), and Asn-332. The S-methylcysteine intermediate role is filled by Cys-375.

It belongs to the radical SAM superfamily. RlmN family. Requires [4Fe-4S] cluster as cofactor.

The protein localises to the cytoplasm. It catalyses the reaction adenosine(2503) in 23S rRNA + 2 reduced [2Fe-2S]-[ferredoxin] + 2 S-adenosyl-L-methionine = 2-methyladenosine(2503) in 23S rRNA + 5'-deoxyadenosine + L-methionine + 2 oxidized [2Fe-2S]-[ferredoxin] + S-adenosyl-L-homocysteine. The catalysed reaction is adenosine(37) in tRNA + 2 reduced [2Fe-2S]-[ferredoxin] + 2 S-adenosyl-L-methionine = 2-methyladenosine(37) in tRNA + 5'-deoxyadenosine + L-methionine + 2 oxidized [2Fe-2S]-[ferredoxin] + S-adenosyl-L-homocysteine. Its function is as follows. Specifically methylates position 2 of adenine 2503 in 23S rRNA and position 2 of adenine 37 in tRNAs. m2A2503 modification seems to play a crucial role in the proofreading step occurring at the peptidyl transferase center and thus would serve to optimize ribosomal fidelity. This Xylella fastidiosa (strain 9a5c) protein is Dual-specificity RNA methyltransferase RlmN.